The sequence spans 257 residues: UPF0246 protein lpl1317 (257 aa).

This sequence belongs to the UPF0246 family.

This Legionella pneumophila (strain Lens) protein is UPF0246 protein lpl1317.